Reading from the N-terminus, the 274-residue chain is Mitochondrial S-adenosylmethionine carrier protein (274 aa).

Solcar repeat units follow at residues 4 to 77, 86 to 168, and 177 to 265; these read PGFV…VKWF, LTPM…LKAL, and VDSW…THSL. The next 6 membrane-spanning stretches (helical) occupy residues 5–25, 49–69, 85–105, 142–162, 182–202, and 238–258; these read GFVAALVAGGVAGVSVDLILF, IYAGVPSAAIGSFPNAAAFFI, YLTPMKHMLAASAGEVVACLI, RGYKSTVLREIPFSLVQFPLW, SAVCGAFAGGFAAAVTTPLDV, and FAGVFPRMAAISLGGFIFLGA.

The protein belongs to the mitochondrial carrier (TC 2.A.29) family. As to expression, widely expressed. Highly expressed in testis, with moderate expression in brain, heart, kidney, lung, skeletal muscle, pancreas, small intestine and liver, and low expression in spleen.

The protein resides in the mitochondrion inner membrane. The catalysed reaction is S-adenosyl-L-homocysteine(out) + S-adenosyl-L-methionine(in) = S-adenosyl-L-homocysteine(in) + S-adenosyl-L-methionine(out). Strongly inhibited by tannic acid and Bromocresol Purple. Functionally, mitochondrial S-adenosyl-L-methionine/S-adenosyl-L-homocysteine antiporter. Mediates the exchange of cytosolic S-adenosyl-L-methionine, the predominant methyl-group donor for macromolecule methylation processes, for mitochondrial S-adenosylhomocysteine(SAH), a by-product of methylation reactions. This chain is Mitochondrial S-adenosylmethionine carrier protein, found in Homo sapiens (Human).